A 492-amino-acid chain; its full sequence is Catalase-3 (492 aa).

Active-site residues include histidine 65 and asparagine 138. Tyrosine 348 is a heme binding site.

The protein belongs to the catalase family. Homotetramer. The cofactor is heme.

The protein resides in the peroxisome. Its subcellular location is the glyoxysome. The catalysed reaction is 2 H2O2 = O2 + 2 H2O. Occurs in almost all aerobically respiring organisms and serves to protect cells from the toxic effects of hydrogen peroxide. The polypeptide is Catalase-3 (CAT3) (Glycine max (Soybean)).